The primary structure comprises 464 residues: Methylenetetrahydrofolate--tRNA-(uracil-5-)-methyltransferase TrmFO (464 aa).

13-18 (GGGLAG) contributes to the FAD binding site.

Belongs to the MnmG family. TrmFO subfamily. It depends on FAD as a cofactor.

It localises to the cytoplasm. It catalyses the reaction uridine(54) in tRNA + (6R)-5,10-methylene-5,6,7,8-tetrahydrofolate + NADH + H(+) = 5-methyluridine(54) in tRNA + (6S)-5,6,7,8-tetrahydrofolate + NAD(+). It carries out the reaction uridine(54) in tRNA + (6R)-5,10-methylene-5,6,7,8-tetrahydrofolate + NADPH + H(+) = 5-methyluridine(54) in tRNA + (6S)-5,6,7,8-tetrahydrofolate + NADP(+). Functionally, catalyzes the folate-dependent formation of 5-methyl-uridine at position 54 (M-5-U54) in all tRNAs. The chain is Methylenetetrahydrofolate--tRNA-(uracil-5-)-methyltransferase TrmFO from Bartonella bacilliformis (strain ATCC 35685 / KC583 / Herrer 020/F12,63).